Reading from the N-terminus, the 118-residue chain is Large ribosomal subunit protein uL18 (118 aa).

Belongs to the universal ribosomal protein uL18 family. Part of the 50S ribosomal subunit; part of the 5S rRNA/L5/L18/L25 subcomplex. Contacts the 5S and 23S rRNAs.

Functionally, this is one of the proteins that bind and probably mediate the attachment of the 5S RNA into the large ribosomal subunit, where it forms part of the central protuberance. This is Large ribosomal subunit protein uL18 from Mycoplasmopsis pulmonis (strain UAB CTIP) (Mycoplasma pulmonis).